Consider the following 316-residue polypeptide: Aspartate carbamoyltransferase catalytic subunit (316 aa).

Residues Arg-59 and Thr-60 each coordinate carbamoyl phosphate. Residue Lys-88 participates in L-aspartate binding. Residues Arg-109, His-137, and Gln-140 each coordinate carbamoyl phosphate. Residues Arg-170 and Arg-232 each coordinate L-aspartate. Carbamoyl phosphate is bound by residues Leu-269 and Pro-270.

Belongs to the aspartate/ornithine carbamoyltransferase superfamily. ATCase family. As to quaternary structure, heterooligomer of catalytic and regulatory chains.

It carries out the reaction carbamoyl phosphate + L-aspartate = N-carbamoyl-L-aspartate + phosphate + H(+). Its pathway is pyrimidine metabolism; UMP biosynthesis via de novo pathway; (S)-dihydroorotate from bicarbonate: step 2/3. Catalyzes the condensation of carbamoyl phosphate and aspartate to form carbamoyl aspartate and inorganic phosphate, the committed step in the de novo pyrimidine nucleotide biosynthesis pathway. The sequence is that of Aspartate carbamoyltransferase catalytic subunit from Methanobrevibacter smithii (strain ATCC 35061 / DSM 861 / OCM 144 / PS).